The following is a 384-amino-acid chain: 3,7-dimethylxanthine N-methyltransferase 1 (384 aa).

The S-adenosyl-L-homocysteine site is built by Y18, C61, N66, D100, L101, S139, F140, and C156. Residue Y157 coordinates theobromine. C158 provides a ligand contact to S-adenosyl-L-homocysteine. Theobromine is bound by residues H160 and W161. N178 contributes to the Mg(2+) binding site. Theobromine is bound at residue S237. Residues D260, F262, and N263 each coordinate Mg(2+). Y368 lines the theobromine pocket.

This sequence belongs to the methyltransferase superfamily. Type-7 methyltransferase family. The cofactor is Mg(2+). Highly expressed in developing endosperm and immature fruits (grains). Detected in young leaves and flower buds, but not in mature fruits.

The catalysed reaction is theobromine + S-adenosyl-L-methionine = caffeine + S-adenosyl-L-homocysteine + H(+). The enzyme catalyses 1,7-dimethylxanthine + S-adenosyl-L-methionine = caffeine + S-adenosyl-L-homocysteine + H(+). It carries out the reaction 7-methylxanthine + S-adenosyl-L-methionine = theobromine + S-adenosyl-L-homocysteine + H(+). The protein operates within alkaloid biosynthesis. In terms of biological role, involved in the biosynthesis of caffeine. Catalyzes the conversion of 7-methylxanthine to caffeine, likely via theobromine as an intermediate. The chain is 3,7-dimethylxanthine N-methyltransferase 1 from Coffea arabica (Arabian coffee).